The following is a 298-amino-acid chain: FH protein interacting protein FIP2 (298 aa).

Residues 9–80 (SMVRLNIGGK…LRDGVIPSLS (72 aa)) form the BTB domain. Pentapeptide repeat domains lie at 129–165 (ERVRFRGVNLSGIDLSKLDLSLVDFSYACLRNVFFSR), 166–203 (TNLQCAKFRNADAEGSIFHNAILRECEFTSANLRGALL), 216–255 (ACLVGCSFCGADLRTAHLQNADLTNANLEGANLEGANLKG), and 256–295 (AKLSNANFKGANLQRAYLRHVNLREAHMEGANLGGANMTG).

Interacts with FH1. Expressed in all tissues but preferentially in roots and flowers.

It participates in protein modification; protein ubiquitination. Functionally, may act as a substrate-specific adapter of an E3 ubiquitin-protein ligase complex (CUL3-RBX1-BTB) which mediates the ubiquitination and subsequent proteasomal degradation of target proteins. The protein is FH protein interacting protein FIP2 (FIP2) of Arabidopsis thaliana (Mouse-ear cress).